The primary structure comprises 452 residues: Enolase (452 aa).

Gln167 contributes to the (2R)-2-phosphoglycerate binding site. Residue Glu209 is the Proton donor of the active site. Asp250, Glu310, and Asp337 together coordinate Mg(2+). Residues Lys362, Arg391, Ser392, and Lys413 each coordinate (2R)-2-phosphoglycerate. Residue Lys362 is the Proton acceptor of the active site.

The protein belongs to the enolase family. Requires Mg(2+) as cofactor.

It is found in the cytoplasm. Its subcellular location is the secreted. The protein localises to the cell surface. The catalysed reaction is (2R)-2-phosphoglycerate = phosphoenolpyruvate + H2O. It participates in carbohydrate degradation; glycolysis; pyruvate from D-glyceraldehyde 3-phosphate: step 4/5. Its function is as follows. Catalyzes the reversible conversion of 2-phosphoglycerate (2-PG) into phosphoenolpyruvate (PEP). It is essential for the degradation of carbohydrates via glycolysis. This is Enolase from Mycoplasmopsis synoviae (strain 53) (Mycoplasma synoviae).